We begin with the raw amino-acid sequence, 158 residues long: Interleukin-36 alpha (158 aa).

A propeptide spanning residues 1–5 is cleaved from the precursor; the sequence is MEKAL. Tyrosine 96 is modified (3'-nitrotyrosine).

This sequence belongs to the IL-1 family. Interacts with TMED10; the interaction mediates the translocation from the cytoplasm into the ERGIC (endoplasmic reticulum-Golgi intermediate compartment) and thereby secretion. Post-translationally, N-terminal truncation leads to a dramatic enhancement of its activity (&gt;1000-fold). Expressed in immune system and fetal brain, but not in other tissues tested or in multiple hematopoietic cell lines. Predominantly expressed in skin keratinocytes but not in fibroblasts, endothelial cells or melanocytes. Increased in lesional psoriasis skin.

It localises to the cytoplasm. It is found in the secreted. Functionally, cytokine that binds to and signals through the IL1RL2/IL-36R receptor which in turn activates NF-kappa-B and MAPK signaling pathways in target cells linked to a pro-inflammatory response. Part of the IL-36 signaling system that is thought to be present in epithelial barriers and to take part in local inflammatory response; similar to the IL-1 system with which it shares the coreceptor IL1RAP. Seems to be involved in skin inflammatory response by acting on keratinocytes, dendritic cells and indirectly on T-cells to drive tissue infiltration, cell maturation and cell proliferation. In cultured keratinocytes induces the expression of macrophage, T-cell, and neutrophil chemokines, such as CCL3, CCL4, CCL5, CCL2, CCL17, CCL22, CL20, CCL5, CCL2, CCL17, CCL22, CXCL8, CCL20 and CXCL1, and the production of pro-inflammatory cytokines such as TNF-alpha, IL-8 and IL-6. In cultured monocytes up-regulates expression of IL-1A, IL-1B and IL-6. In myeloid dendritic cells involved in cell maturation by up-regulating surface expression of CD83, CD86 and HLA-DR. In monocyte-derived dendritic cells facilitates dendritic cell maturation and drives T-cell proliferation. May play a role in pro-inflammatory effects in the lung. The chain is Interleukin-36 alpha from Homo sapiens (Human).